Reading from the N-terminus, the 386-residue chain is Acyl-[acyl-carrier-protein] dehydrogenase MbtN (386 aa).

The protein belongs to the acyl-CoA dehydrogenase family. FAD is required as a cofactor.

It participates in siderophore biosynthesis; mycobactin biosynthesis. In terms of biological role, catalyzes the dehydrogenation at the alpha-beta position of ACP-bound acyl chains. This results in the introduction of a double bond in the lipidic chain, which is further transferred to the epsilon-amino group of lysine residue in the mycobactin core by MbtK. This is Acyl-[acyl-carrier-protein] dehydrogenase MbtN (mbtN) from Mycobacterium bovis (strain ATCC BAA-935 / AF2122/97).